The chain runs to 448 residues: Probable glycine dehydrogenase (decarboxylating) subunit 1 (448 aa).

It belongs to the GcvP family. N-terminal subunit subfamily. The glycine cleavage system is composed of four proteins: P, T, L and H. In this organism, the P 'protein' is a heterodimer of two subunits.

The catalysed reaction is N(6)-[(R)-lipoyl]-L-lysyl-[glycine-cleavage complex H protein] + glycine + H(+) = N(6)-[(R)-S(8)-aminomethyldihydrolipoyl]-L-lysyl-[glycine-cleavage complex H protein] + CO2. Functionally, the glycine cleavage system catalyzes the degradation of glycine. The P protein binds the alpha-amino group of glycine through its pyridoxal phosphate cofactor; CO(2) is released and the remaining methylamine moiety is then transferred to the lipoamide cofactor of the H protein. This chain is Probable glycine dehydrogenase (decarboxylating) subunit 1, found in Staphylococcus aureus (strain Mu3 / ATCC 700698).